A 430-amino-acid polypeptide reads, in one-letter code: Serine--tRNA ligase (430 aa).

231–233 (TSE) serves as a coordination point for L-serine. 262-264 (RSE) provides a ligand contact to ATP. Glu285 serves as a coordination point for L-serine. 349-352 (EISS) is an ATP binding site. Ser385 is a binding site for L-serine.

The protein belongs to the class-II aminoacyl-tRNA synthetase family. Type-1 seryl-tRNA synthetase subfamily. In terms of assembly, homodimer. The tRNA molecule binds across the dimer.

It is found in the cytoplasm. It catalyses the reaction tRNA(Ser) + L-serine + ATP = L-seryl-tRNA(Ser) + AMP + diphosphate + H(+). It carries out the reaction tRNA(Sec) + L-serine + ATP = L-seryl-tRNA(Sec) + AMP + diphosphate + H(+). It functions in the pathway aminoacyl-tRNA biosynthesis; selenocysteinyl-tRNA(Sec) biosynthesis; L-seryl-tRNA(Sec) from L-serine and tRNA(Sec): step 1/1. Functionally, catalyzes the attachment of serine to tRNA(Ser). Is also able to aminoacylate tRNA(Sec) with serine, to form the misacylated tRNA L-seryl-tRNA(Sec), which will be further converted into selenocysteinyl-tRNA(Sec). The sequence is that of Serine--tRNA ligase from Ruegeria pomeroyi (strain ATCC 700808 / DSM 15171 / DSS-3) (Silicibacter pomeroyi).